The primary structure comprises 516 residues: Maturase K (516 aa).

Belongs to the intron maturase 2 family. MatK subfamily.

Its subcellular location is the plastid. It localises to the chloroplast. Its function is as follows. Usually encoded in the trnK tRNA gene intron. Probably assists in splicing its own and other chloroplast group II introns. The sequence is that of Maturase K from Cypripedium calceolus (Yellow lady's slipper).